Consider the following 104-residue polypeptide: Small ribosomal subunit protein uS10 (104 aa).

Belongs to the universal ribosomal protein uS10 family. Part of the 30S ribosomal subunit.

In terms of biological role, involved in the binding of tRNA to the ribosomes. The protein is Small ribosomal subunit protein uS10 of Gloeobacter violaceus (strain ATCC 29082 / PCC 7421).